Here is a 1272-residue protein sequence, read N- to C-terminus: Fused isobutyryl-CoA mutase (1272 aa).

In terms of domain architecture, B12-binding spans 20-158 (RLRFVTAAAL…ARCAEGARAA (139 aa)). Histidine 33 lines the adenosylcob(III)alamin pocket. The segment at 163 to 536 (ESQVGAWAAE…YRHVAEALRK (374 aa)) is GTPase chaperone MeaI. Positions 193–240 (GAVARNPSSEASRVAAAGRGDHLDRGVRAASTADTADTANTANTANTA) are disordered. The span at 221 to 240 (AASTADTADTANTANTANTA) shows a compositional bias: low complexity. GTP is bound at residue 334-339 (GAGKSS). The Mg(2+) site is built by serine 338, isoleucine 363, aspartate 364, and aspartate 377. A GTP-binding site is contributed by arginine 380. Mg(2+) contacts are provided by glutamate 429 and threonine 430. 476–479 (NKFD) contributes to the GTP binding site. The linker stretch occupies residues 537–758 (HGLRSGGGRL…MLDNLPGYFP (222 aa)). Low complexity-rich tracts occupy residues 614-631 (TVAT…KANA) and 639-663 (ANAS…ATPT). Positions 614 to 667 (TVATSASPGASASSKANACTSTSSKANASPGANTTANSNASATSGTATPTDALN) are disordered. Substrate-binding residues include phenylalanine 766, arginine 801, arginine 907, tyrosine 951, serine 1000, arginine 1035, and lysine 1040. 2 residues coordinate GTP: glutamate 1152 and asparagine 1271.

Belongs to the IcmF family. Homodimer. The cofactor is adenosylcob(III)alamin. Requires Mg(2+) as cofactor.

It catalyses the reaction 2-methylpropanoyl-CoA = butanoyl-CoA. The catalysed reaction is GTP + H2O = GDP + phosphate + H(+). Functionally, catalyzes the reversible interconversion of isobutyryl-CoA and n-butyryl-CoA, using radical chemistry. Also exhibits GTPase activity, associated with its G-protein domain (MeaI) that functions as a chaperone that assists cofactor delivery and proper holo-enzyme assembly. Does not exhibit methylmalonyl-CoA mutase (MCM) activity. The polypeptide is Fused isobutyryl-CoA mutase (Paraburkholderia xenovorans (strain LB400)).